We begin with the raw amino-acid sequence, 101 residues long: uncharacterized protein (101 aa).

The signal sequence occupies residues Met1 to Gly17. Cys18 is lipidated: N-palmitoyl cysteine. Residue Cys18 is the site of S-diacylglycerol cysteine attachment.

The protein localises to the cell membrane. This is an uncharacterized protein from Pasteurella multocida (strain Pm70).